A 911-amino-acid chain; its full sequence is Isoleucine--tRNA ligase (911 aa).

The 'HIGH' region motif lies at 57–67 (PYANGHIHIGH). An L-isoleucyl-5'-AMP-binding site is contributed by E564. The 'KMSKS' region signature appears at 605 to 609 (KMSKS). K608 serves as a coordination point for ATP. Residues C887, C890, C902, and C905 each coordinate Zn(2+).

It belongs to the class-I aminoacyl-tRNA synthetase family. IleS type 1 subfamily. As to quaternary structure, monomer. Requires Zn(2+) as cofactor.

The protein localises to the cytoplasm. The enzyme catalyses tRNA(Ile) + L-isoleucine + ATP = L-isoleucyl-tRNA(Ile) + AMP + diphosphate. Catalyzes the attachment of isoleucine to tRNA(Ile). As IleRS can inadvertently accommodate and process structurally similar amino acids such as valine, to avoid such errors it has two additional distinct tRNA(Ile)-dependent editing activities. One activity is designated as 'pretransfer' editing and involves the hydrolysis of activated Val-AMP. The other activity is designated 'posttransfer' editing and involves deacylation of mischarged Val-tRNA(Ile). This chain is Isoleucine--tRNA ligase, found in Nautilia profundicola (strain ATCC BAA-1463 / DSM 18972 / AmH).